The sequence spans 391 residues: NADH-quinone oxidoreductase subunit D (391 aa).

Belongs to the complex I 49 kDa subunit family. As to quaternary structure, NDH-1 is composed of 14 different subunits. Subunits NuoB, C, D, E, F, and G constitute the peripheral sector of the complex.

The protein localises to the cell inner membrane. The catalysed reaction is a quinone + NADH + 5 H(+)(in) = a quinol + NAD(+) + 4 H(+)(out). Its function is as follows. NDH-1 shuttles electrons from NADH, via FMN and iron-sulfur (Fe-S) centers, to quinones in the respiratory chain. The immediate electron acceptor for the enzyme in this species is believed to be ubiquinone. Couples the redox reaction to proton translocation (for every two electrons transferred, four hydrogen ions are translocated across the cytoplasmic membrane), and thus conserves the redox energy in a proton gradient. This Rickettsia akari (strain Hartford) protein is NADH-quinone oxidoreductase subunit D.